We begin with the raw amino-acid sequence, 70 residues long: Large ribosomal subunit protein bL31 (70 aa).

The Zn(2+) site is built by cysteine 16, cysteine 18, cysteine 38, and cysteine 41.

Belongs to the bacterial ribosomal protein bL31 family. Type A subfamily. As to quaternary structure, part of the 50S ribosomal subunit. It depends on Zn(2+) as a cofactor.

Its function is as follows. Binds the 23S rRNA. The polypeptide is Large ribosomal subunit protein bL31 (Mycolicibacterium gilvum (strain PYR-GCK) (Mycobacterium gilvum (strain PYR-GCK))).